The primary structure comprises 240 residues: UDP-2,3-diacylglucosamine hydrolase (240 aa).

Residues Asp7, His9, Asp40, Asn78, and His113 each coordinate Mn(2+). Asn78–Arg79 contributes to the substrate binding site. Asp121, Ser159, Thr163, Lys166, and His194 together coordinate substrate. Residues His194 and His196 each coordinate Mn(2+).

The protein belongs to the LpxH family. It depends on Mn(2+) as a cofactor.

The protein localises to the cell inner membrane. The enzyme catalyses UDP-2-N,3-O-bis[(3R)-3-hydroxytetradecanoyl]-alpha-D-glucosamine + H2O = 2-N,3-O-bis[(3R)-3-hydroxytetradecanoyl]-alpha-D-glucosaminyl 1-phosphate + UMP + 2 H(+). The protein operates within glycolipid biosynthesis; lipid IV(A) biosynthesis; lipid IV(A) from (3R)-3-hydroxytetradecanoyl-[acyl-carrier-protein] and UDP-N-acetyl-alpha-D-glucosamine: step 4/6. Hydrolyzes the pyrophosphate bond of UDP-2,3-diacylglucosamine to yield 2,3-diacylglucosamine 1-phosphate (lipid X) and UMP by catalyzing the attack of water at the alpha-P atom. Involved in the biosynthesis of lipid A, a phosphorylated glycolipid that anchors the lipopolysaccharide to the outer membrane of the cell. In Stutzerimonas stutzeri (strain A1501) (Pseudomonas stutzeri), this protein is UDP-2,3-diacylglucosamine hydrolase.